We begin with the raw amino-acid sequence, 1377 residues long: DNA-directed RNA polymerase subunit beta (1377 aa).

The protein belongs to the RNA polymerase beta chain family. The RNAP catalytic core consists of 2 alpha, 1 beta, 1 beta' and 1 omega subunit. When a sigma factor is associated with the core the holoenzyme is formed, which can initiate transcription.

It carries out the reaction RNA(n) + a ribonucleoside 5'-triphosphate = RNA(n+1) + diphosphate. In terms of biological role, DNA-dependent RNA polymerase catalyzes the transcription of DNA into RNA using the four ribonucleoside triphosphates as substrates. This Brucella melitensis biotype 2 (strain ATCC 23457) protein is DNA-directed RNA polymerase subunit beta.